A 223-amino-acid chain; its full sequence is Fibroblast growth factor-binding protein 2 (223 aa).

The first 19 residues, 1–19 (MKFVPCLLLVTLSCLGTLG), serve as a signal peptide directing secretion. Residues 23 to 45 (RQKQGSTGEEFHFQTGGRDSCTM) form a disordered region. 3 disulfides stabilise this stretch: C43–C63, C72–C106, and C81–C117. The disordered stretch occupies residues 120-201 (AGPQAHMQQV…PGGNEEAKKK (82 aa)). Residues 125–144 (HMQQVTSSLKGSPEPNQQPE) are compositionally biased toward polar residues. A compositionally biased stretch (low complexity) spans 175 to 186 (AKPTTRPTAKPT). C206 and C214 are oxidised to a cystine.

This sequence belongs to the fibroblast growth factor-binding protein family. In terms of tissue distribution, expressed in serum, peripheral leukocytes and cytotoxic T-lymphocytes, but not in granulocytes and monocytes (at protein level).

It is found in the secreted. It localises to the extracellular space. In Homo sapiens (Human), this protein is Fibroblast growth factor-binding protein 2 (FGFBP2).